The sequence spans 530 residues: Probable basic-leucine zipper transcription factor L (530 aa).

2 stretches are compositionally biased toward low complexity: residues 1-17 (MYSP…SPES) and 24-39 (SINN…ANQS). The tract at residues 1 to 76 (MYSPSSPQSS…QSAALSRSRK (76 aa)) is disordered. Residues 55–118 (VKKRQVRLLK…FETKSRLEFL (64 aa)) form the bZIP domain. The tract at residues 56-77 (KKRQVRLLKNRQSAALSRSRKK) is basic motif. The segment at 83–104 (LESKAQELTHSTQELHVQYNKI) is leucine-zipper. Disordered regions lie at residues 142-177 (NNIK…TTPV), 216-258 (SQNK…SPTP), and 389-481 (HHHH…SQIN). Composition is skewed to low complexity over residues 149–176 (RSNS…STTP) and 220–247 (NNNN…NTTN). Over residues 248 to 257 (LLDQQQQSPT) the composition is skewed to polar residues. Over residues 436 to 478 (SSSPSSSSTSSPSTSSPSTPKSMGFPSPIFIGSSGSGPSSSGS) the composition is skewed to low complexity.

It belongs to the bZIP family.

The protein localises to the nucleus. Its function is as follows. Probable transcriptional regulator. The protein is Probable basic-leucine zipper transcription factor L (bzpL) of Dictyostelium discoideum (Social amoeba).